The primary structure comprises 757 residues: Dolichyl-diphosphooligosaccharide--protein glycosyltransferase subunit stt-3 (757 aa).

At 1-13 (MTSTTAARTASSR) the chain is on the cytoplasmic side. The helical transmembrane segment at 14 to 34 (VGATTLLTIVVLALAWFVGFA) threads the bilayer. The Lumenal segment spans residues 35–121 (SRLFAIVRFE…VHIREVCVFL (87 aa)). The short motif at 49–51 (EFD) is the DXD motif 1 element. D51 serves as a coordination point for Mn(2+). A helical membrane pass occupies residues 122-140 (APTFSGLTAIATYLLTKEL). Residues 141–142 (WS) are Cytoplasmic-facing. A helical membrane pass occupies residues 143–160 (PGAGLFAACFIAISPGYT). Topologically, residues 161-171 (SRSVAGSYDNE) are lumenal. Positions 169 and 171 each coordinate Mn(2+). The DXD motif 2 motif lies at 169–171 (DNE). Residues 172–191 (GIAIFALQFTYYLWVKSLKT) form a helical membrane-spanning segment. The Cytoplasmic portion of the chain corresponds to 192–193 (GS). Residues 194–208 (IMWASLCALSYFYMV) traverse the membrane as a helical segment. Residues 209–210 (SA) lie on the Lumenal side of the membrane. 2 helical membrane-spanning segments follow: residues 211-235 (WGGYVFIINLIPLHALALIIMGRYS) and 236-261 (SRLFVSYTSFYCLATILSMQVPFVGF). Residues 262–269 (QPVRTSEH) are Lumenal-facing. The helical transmembrane segment at 270–289 (MPAFGVFGLLQIVALMHYAR) threads the bilayer. Over 290–299 (NRITRQQFMT) the chain is Cytoplasmic. The helical transmembrane segment at 300 to 320 (LFVGGLTILGALSVVVYFALV) threads the bilayer. At 321-358 (WGGYVAPFSGRFYSLWDTGYAKIHIPIIASVSEHQPTT) the chain is on the lumenal side. An SVSE motif motif is present at residues 350–353 (SVSE). Residues 359 to 381 (WVSFFFDLHITAAVFPVGLWYCI) traverse the membrane as a helical segment. Topologically, residues 382-387 (KKVNDE) are cytoplasmic. Residues 388–404 (RVFIILYAVSAVYFAGV) traverse the membrane as a helical segment. Residues 405 to 408 (MVRL) are Lumenal-facing. R407 is a dolichyl diphosphooligosaccharide binding site. The helical transmembrane segment at 409–430 (MLTLTPAVCVLAGIGFSYTFEK) threads the bilayer. Residues 431–469 (YLKDEETKERSSSQSGTTKDEKLYDKAAKNVKSRNANDG) are Cytoplasmic-facing. Residues 470–495 (DESGVSSNVRTIISIILVIFLLMFVV) traverse the membrane as a helical segment. The Lumenal segment spans residues 496 to 757 (HATYVTSNAY…IRPAPTASKA (262 aa)). The segment at 547-549 (WWD) is interacts with target acceptor peptide in protein substrate. Residues 547 to 551 (WWDYG) carry the WWDYG motif motif. Y552 serves as a coordination point for dolichyl diphosphooligosaccharide. 2 N-linked (GlcNAc...) asparagine glycosylation sites follow: N559 and N566. The N-linked (GlcNAc...) (high mannose) asparagine glycan is linked to N570. N584 carries N-linked (GlcNAc...) asparagine glycosylation. Residues 614–621 (DINKFLWM) carry the DK motif motif. The interval 721-757 (RPTVKSEEATIPIKGKKATQGKNKKGVIRPAPTASKA) is disordered. Over residues 734–747 (KGKKATQGKNKKGV) the composition is skewed to basic residues.

Belongs to the STT3 family. In terms of assembly, component of the oligosaccharyltransferase (OST) complex. The cofactor is Mg(2+). Mn(2+) is required as a cofactor.

The protein localises to the endoplasmic reticulum membrane. It catalyses the reaction a di-trans,poly-cis-dolichyl diphosphooligosaccharide + L-asparaginyl-[protein] = N(4)-(oligosaccharide-(1-&gt;4)-N-acetyl-beta-D-glucosaminyl-(1-&gt;4)-N-acetyl-beta-D-glucosaminyl)-L-asparaginyl-[protein] + a di-trans,poly-cis-dolichyl diphosphate + H(+). It participates in protein modification; protein glycosylation. Its function is as follows. Catalytic subunit of the oligosaccharyl transferase (OST) complex that catalyzes the initial transfer of a defined glycan (Glc(3)Man(9)GlcNAc(2) in eukaryotes) from the lipid carrier dolichol-pyrophosphate to an asparagine residue within an Asn-X-Ser/Thr consensus motif in nascent polypeptide chains, the first step in protein N-glycosylation. N-glycosylation occurs cotranslationally and the complex associates with the Sec61 complex at the channel-forming translocon complex that mediates protein translocation across the endoplasmic reticulum (ER). All subunits are required for a maximal enzyme activity. This subunit contains the active site and the acceptor peptide and donor lipid-linked oligosaccharide (LLO) binding pockets. This Caenorhabditis elegans protein is Dolichyl-diphosphooligosaccharide--protein glycosyltransferase subunit stt-3.